Reading from the N-terminus, the 301-residue chain is F-actin-capping protein subunit beta (301 aa).

Serine 31 is subject to Phosphoserine. Lysine 264 is subject to N6-acetyllysine.

Belongs to the F-actin-capping protein beta subunit family. As to quaternary structure, component of the F-actin capping complex, composed of a heterodimer of an alpha and a beta subunit. Subunit of dynactin, a multiprotein complex part of a tripartite complex with dynein and a adapter, such as BICDL1, BICD2 or HOOK3. The dynactin complex is built around ACTR1A/ACTB filament and consists of an actin-related filament composed of a shoulder domain, a pointed end and a barbed end. Its length is defined by its flexible shoulder domain. The soulder is composed of 2 DCTN1 subunits, 4 DCTN2 and 2 DCTN3. The 4 DCNT2 (via N-terminus) bind the ACTR1A filament and act as molecular rulers to determine the length. The pointed end is important for binding dynein-dynactin cargo adapters. Consists of 4 subunits: ACTR10, DCNT4, DCTN5 and DCTN6. The barbed end is composed of a CAPZA1:CAPZB heterodimers, which binds ACTR1A/ACTB filament and dynactin and stabilizes dynactin. Interacts with ARHGAP17. Interaction with RCSD1/CAPZIP. Component of the WASH complex, composed of F-actin-capping protein subunit alpha (CAPZA1, CAPZA2 or CAPZA3), F-actin-capping protein subunit beta (CAPZB), WASH (WASHC1, WASH2P, WASH3P, WASH4P, WASH5P or WASH6P), WASHC2 (WASHC2A or WASHC2C), WASHC3, WASHC4 and WASHC5. Interacts with ACTG1. Directly interacts with CRACD; this interaction decreases binding to actin. The isoform beta-3 is predominantly expressed in the testis. It is only detected in total sperm, sperm heads and the calyx fraction, but not in sperm tails or any supernatant fraction. Weaker expression also found in brain.

The protein localises to the cytoplasm. The protein resides in the cytoskeleton. Its subcellular location is the perinuclear theca. It localises to the calyx. In terms of biological role, F-actin-capping proteins bind in a Ca(2+)-independent manner to the fast growing ends of actin filaments (barbed end) thereby blocking the exchange of subunits at these ends. Unlike other capping proteins (such as gelsolin and severin), these proteins do not sever actin filaments. Plays a role in the regulation of cell morphology and cytoskeletal organization. Forms, with CAPZB, the barbed end of the fast growing ends of actin filaments in the dynactin complex and stabilizes dynactin structure. The dynactin multiprotein complex activates the molecular motor dynein for ultra-processive transport along microtubules. The chain is F-actin-capping protein subunit beta (CAPZB) from Bos taurus (Bovine).